The primary structure comprises 88 residues: RQC P-site tRNA stabilizing factor (88 aa).

An S4 RNA-binding domain is found at methionine 1–valine 60.

It belongs to the RqcP family. As to quaternary structure, associates with stalled 50S ribosomal subunits. Binds to RqcH, 23S rRNA and the P-site tRNA. Does not require RqcH for association with 50S subunits.

Functionally, key component of the ribosome quality control system (RQC), a ribosome-associated complex that mediates the extraction of incompletely synthesized nascent chains from stalled ribosomes and their subsequent degradation. RqcH recruits Ala-charged tRNA, and with RqcP directs the elongation of stalled nascent chains on 50S ribosomal subunits, leading to non-templated C-terminal alanine extensions (Ala tail). The Ala tail promotes nascent chain degradation. RqcP is associated with the translocation-like movement of the peptidyl-tRNA from the A-site into the P-site. This Streptococcus pneumoniae (strain ATCC BAA-255 / R6) protein is RQC P-site tRNA stabilizing factor.